We begin with the raw amino-acid sequence, 1383 residues long: Cell surface hyaluronidase (1383 aa).

A disordered region spans residues 1–76 (MYAAGSRGHS…QRTPSESRKR (76 aa)). The Cytoplasmic portion of the chain corresponds to 1–82 (MYAAGSRGHS…SRKRKRHKNT (82 aa)). A phosphoserine mark is found at serine 10, serine 53, and serine 63. The chain crosses the membrane as a helical; Signal-anchor for type II membrane protein span at residues 83-103 (FICFAITSFSFFVALAVILGI). Residues 104 to 1383 (SSKYAPDENC…DLLQQALKVL (1280 aa)) are Extracellular-facing. One can recognise a G8 domain in the interval 121-245 (RNWDPGQDSA…QRTSWTMLAR (125 aa)). In terms of domain architecture, GG-type lectin 1 spans 255–412 (GSYAFEKDFS…ISLSGFRVDI (158 aa)). A glycan (N-linked (GlcNAc...) asparagine) is linked at asparagine 292. 3 PbH1 repeats span residues 669-691 (HPNNHLINNAAAGSQDAGIWYLF), 711-733 (TPLGIFYNNRVHSNFKAGLFVDK), and 791-812 (GGDIIVQNSAFADNGKGLTFAS). 2 N-linked (GlcNAc...) asparagine glycosylation sites follow: asparagine 914 and asparagine 1234. Residues 1208–1366 (KSYLPVRFQS…MEEYGCSRTG (159 aa)) enclose the GG-type lectin 2 domain.

It belongs to the CEMIP family. Ca(2+) serves as cofactor. As to expression, widely expressed. Strongly expressed in endothelial cells in the subcapsular sinus of lymph nodes and in the liver sinusoid, two primary sites implicated in systemic hyaluronan turnover.

It localises to the cell membrane. It catalyses the reaction Random hydrolysis of (1-&gt;4)-linkages between N-acetyl-beta-D-glucosamine and D-glucuronate residues in hyaluronate.. Its function is as follows. Cell surface hyaluronidase that mediates the initial cleavage of extracellular high-molecular-weight hyaluronan into intermediate-size hyaluronan of approximately 5 kDa fragments. Very specific to hyaluronan; not able to cleave chondroitin sulfate or dermatan sulfate. Has an essential function in systemic hyaluronan catabolism and turnover and regulates cell adhesion and migration via hyaluronan degradation at focal adhesion sites. Acts as a regulator of angiogenesis and heart morphogenesis by mediating degradation of extracellular hyaluronan, thereby regulating VEGF signaling. This is Cell surface hyaluronidase from Mus musculus (Mouse).